We begin with the raw amino-acid sequence, 273 residues long: Probable glycerophosphodiester phosphodiesterase GpdQ (273 aa).

Asp8, His10, Asp50, Asn80, His154, His194, and His196 together coordinate Fe cation.

Belongs to the cyclic nucleotide phosphodiesterase class-III family. The cofactor is Fe(2+).

It carries out the reaction a sn-glycero-3-phosphodiester + H2O = an alcohol + sn-glycerol 3-phosphate + H(+). It catalyses the reaction sn-glycero-3-phosphoethanolamine + H2O = ethanolamine + sn-glycerol 3-phosphate + H(+). Catalyzes the hydrolysis of the 3'-5' phosphodiester bond of glycerophosphodiesters such as glycerophosphorylethanolamine (GPE), a typical phospholipid metabolite. The chain is Probable glycerophosphodiester phosphodiesterase GpdQ from Arcobacter nitrofigilis (strain ATCC 33309 / DSM 7299 / CCUG 15893 / LMG 7604 / NCTC 12251 / CI) (Campylobacter nitrofigilis).